The sequence spans 78 residues: Alpha-neurotoxin homolog 1 (78 aa).

An N-terminal signal peptide occupies residues Met1–Thr21. 4 disulfides stabilise this stretch: Cys24–Cys42, Cys37–Cys57, Cys59–Cys70, and Cys71–Cys76.

Belongs to the three-finger toxin family. Short-chain subfamily. Orphan group XII sub-subfamily. Expressed by the venom gland.

The protein resides in the secreted. This Micrurus corallinus (Brazilian coral snake) protein is Alpha-neurotoxin homolog 1.